Here is a 954-residue protein sequence, read N- to C-terminus: Valine--tRNA ligase (954 aa).

Positions 48–58 match the 'HIGH' region motif; it reads PNVTGSLHMGH. A 'KMSKS' region motif is present at residues 560–564; the sequence is KMSKS. Lysine 563 contributes to the ATP binding site. The stretch at 886–954 forms a coiled coil; it reads INKDTELARL…RAQYLSIENL (69 aa).

It belongs to the class-I aminoacyl-tRNA synthetase family. ValS type 1 subfamily. As to quaternary structure, monomer.

The protein localises to the cytoplasm. The enzyme catalyses tRNA(Val) + L-valine + ATP = L-valyl-tRNA(Val) + AMP + diphosphate. Catalyzes the attachment of valine to tRNA(Val). As ValRS can inadvertently accommodate and process structurally similar amino acids such as threonine, to avoid such errors, it has a 'posttransfer' editing activity that hydrolyzes mischarged Thr-tRNA(Val) in a tRNA-dependent manner. In Mannheimia succiniciproducens (strain KCTC 0769BP / MBEL55E), this protein is Valine--tRNA ligase.